We begin with the raw amino-acid sequence, 109 residues long: ATP-dependent Clp protease adapter protein ClpS (109 aa).

Positions 1 to 23 (MTERKHDDTGVEEGTGLATKTRP) are disordered.

This sequence belongs to the ClpS family. Binds to the N-terminal domain of the chaperone ClpA.

Its function is as follows. Involved in the modulation of the specificity of the ClpAP-mediated ATP-dependent protein degradation. The protein is ATP-dependent Clp protease adapter protein ClpS of Maricaulis maris (strain MCS10) (Caulobacter maris).